We begin with the raw amino-acid sequence, 219 residues long: Transcription factor MYB23 (219 aa).

HTH myb-type domains follow at residues E9–L61 and S62–L116. 2 consecutive DNA-binding regions (H-T-H motif) follow at residues W37–L61 and W89–L112.

As to quaternary structure, interacts with BHLH2/EGL3/MYC146, BHLH12/MYC1 and GL3. Expressed in roots, seed coats, leaves, stems and flowers. Detected specifically in trichomes, and in the cell division and differentiation zone of the root.

It is found in the nucleus. Transcription activator, when associated with BHLH2/EGL3/MYC146 or BHLH12/MYC1. Regulates the epidermal cell fate specification. Mediates the formation of columellae and accumulation of mucilages on seed coats. Controls the elongation of epidermal cells positively in roots but negatively in stems, leading to the promotion of primary roots elongation and repression of leaves and stems elongation, respectively. Ovoids ectopic root-hair formation, probably by inducing GL2 in roots. Controls trichome initiation and branching. The protein is Transcription factor MYB23 (MYB23) of Arabidopsis thaliana (Mouse-ear cress).